A 1192-amino-acid polypeptide reads, in one-letter code: Protein pangolin, isoform J (1192 aa).

The Nuclear localization signal signature appears at 351–357 (LGLPSEE). The disordered stretch occupies residues 691-713 (AKHTSNAQSNESKETTNDKKKPH). Residues 714 to 782 (IKKPLNAFML…LHMELYPGWS (69 aa)) constitute a DNA-binding region (HMG box). Disordered regions lie at residues 790 to 812 (VSKKKKRKKDRSTTDSGGNNMKK), 847 to 916 (PAED…SPST), 955 to 986 (QRPTLVSTSGSSSGSTSSISTTPNTSSTVSPV), and 1136 to 1192 (QLNN…ISVS). A compositionally biased stretch (acidic residues) spans 862–871 (SDDDEDDYDD). Low complexity-rich tracts occupy residues 898–915 (SMPSPGCLSGLSSLQSPS) and 957–986 (PTLVSTSGSSSGSTSSISTTPNTSSTVSPV). 2 stretches are compositionally biased toward polar residues: residues 1140–1162 (RTENPNRSEQTMLSVSNHSVNSS) and 1170–1192 (SQAIVSSNPPNAGSSDNGVISVS).

The protein belongs to the TCF/LEF family. As to quaternary structure, binds to the beta-catenin homolog arm or to gro.

Its subcellular location is the nucleus. Segment polarity protein. Functions together with arm to transduce the Wingless (Wg) signal in embryos and in developing adult tissues. Acts as a transcriptional activator, but in the absence of arm, it binds to gro and acts as a transcriptional repressor of wg-responsive genes. The polypeptide is Protein pangolin, isoform J (Drosophila melanogaster (Fruit fly)).